We begin with the raw amino-acid sequence, 152 residues long: D-aminoacyl-tRNA deacylase (152 aa).

The short motif at 137–138 is the Gly-cisPro motif, important for rejection of L-amino acids element; that stretch reads GP.

Belongs to the DTD family. As to quaternary structure, homodimer.

The protein localises to the cytoplasm. It catalyses the reaction glycyl-tRNA(Ala) + H2O = tRNA(Ala) + glycine + H(+). It carries out the reaction a D-aminoacyl-tRNA + H2O = a tRNA + a D-alpha-amino acid + H(+). An aminoacyl-tRNA editing enzyme that deacylates mischarged D-aminoacyl-tRNAs. Also deacylates mischarged glycyl-tRNA(Ala), protecting cells against glycine mischarging by AlaRS. Acts via tRNA-based rather than protein-based catalysis; rejects L-amino acids rather than detecting D-amino acids in the active site. By recycling D-aminoacyl-tRNA to D-amino acids and free tRNA molecules, this enzyme counteracts the toxicity associated with the formation of D-aminoacyl-tRNA entities in vivo and helps enforce protein L-homochirality. In Geobacter sulfurreducens (strain ATCC 51573 / DSM 12127 / PCA), this protein is D-aminoacyl-tRNA deacylase.